The chain runs to 396 residues: S-adenosylmethionine synthase (396 aa).

His-16 contacts ATP. Asp-18 contacts Mg(2+). Glu-44 contributes to the K(+) binding site. L-methionine contacts are provided by Glu-57 and Gln-100. The tract at residues 100–110 is flexible loop; the sequence is QSVDIAQGVDR. ATP-binding positions include 165-167, Asp-240, 246-247, Ala-263, and Lys-267; these read DAK and RK. Asp-240 serves as a coordination point for L-methionine. An L-methionine-binding site is contributed by Lys-271.

It belongs to the AdoMet synthase family. Homotetramer; dimer of dimers. Mg(2+) serves as cofactor. Requires K(+) as cofactor.

Its subcellular location is the cytoplasm. It carries out the reaction L-methionine + ATP + H2O = S-adenosyl-L-methionine + phosphate + diphosphate. Its pathway is amino-acid biosynthesis; S-adenosyl-L-methionine biosynthesis; S-adenosyl-L-methionine from L-methionine: step 1/1. Functionally, catalyzes the formation of S-adenosylmethionine (AdoMet) from methionine and ATP. The overall synthetic reaction is composed of two sequential steps, AdoMet formation and the subsequent tripolyphosphate hydrolysis which occurs prior to release of AdoMet from the enzyme. The protein is S-adenosylmethionine synthase of Pseudomonas savastanoi pv. phaseolicola (strain 1448A / Race 6) (Pseudomonas syringae pv. phaseolicola (strain 1448A / Race 6)).